Consider the following 22-residue polypeptide: Large ribosomal subunit protein bL32 (22 aa).

The disordered stretch occupies residues Cys1–Thr22.

This sequence belongs to the bacterial ribosomal protein bL32 family.

In Brevundimonas vesicularis (Pseudomonas vesicularis), this protein is Large ribosomal subunit protein bL32 (rpmF).